Reading from the N-terminus, the 391-residue chain is Ectodysplasin-A (391 aa).

Positions 1–21 are enriched in basic and acidic residues; it reads MGYPEVERREPLPAAAPRERG. The interval 1–28 is disordered; that stretch reads MGYPEVERREPLPAAAPRERGSQGCGCR. Over 1–41 the chain is Cytoplasmic; that stretch reads MGYPEVERREPLPAAAPRERGSQGCGCRGAPARAGEGNSCR. The helical; Signal-anchor for type II membrane protein transmembrane segment at 42-62 threads the bilayer; sequence LFLGFFGLSLALHLLTLCCYL. Over 63-391 the chain is Extracellular; sequence ELRSELRRER…AIRLGEAPAS (329 aa). Disordered stretches follow at residues 73 to 130 and 145 to 245; these read GAES…SQDG and SYSE…GTRE. Residues 76–96 show a composition bias toward low complexity; it reads SRFSGPGTPGTSGTLSSPGGL. The region spanning 180-229 is the Collagen-like domain; it reads GPPGPNGPPGPPGPPGPQGPPGIPGIPGIPGTTVMGPPGPPGPPGPQGPP. Pro residues-rich tracts occupy residues 181-203 and 216-228; these read PPGP…PGIP and PPGP…PQGP. In terms of domain architecture, THD spans 249–385; that stretch reads AVVHLQGQGS…HTTFFGAIRL (137 aa). An N-linked (GlcNAc...) asparagine glycan is attached at Asn313. Cys332 and Cys346 are oxidised to a cystine. The N-linked (GlcNAc...) asparagine glycan is linked to Asn372.

Belongs to the tumor necrosis factor family. As to quaternary structure, homotrimer. The homotrimers may then dimerize and form higher-order oligomers. N-glycosylated. In terms of processing, processing by furin produces a secreted form.

The protein resides in the cell membrane. It localises to the secreted. Its function is as follows. Cytokine which is involved in epithelial-mesenchymal signaling during morphogenesis of ectodermal organs. Functions as a ligand activating the DEATH-domain containing receptors EDAR and EDA2R. Isoform A1 binds only to the receptor EDAR, while isoform A2 binds exclusively to the receptor EDA2R. May also play a role in cell adhesion. In terms of biological role, isoform A1 binds only to the receptor EDAR, while isoform A2 binds exclusively to the receptor EDA2R. Isoform A2 binds exclusively to the receptor EDA2R. The polypeptide is Ectodysplasin-A (EDA) (Bos taurus (Bovine)).